The chain runs to 837 residues: MKKLIVQFTTITLLMSTSFLVGAQRYSFDPNLLVDGNNNTDTSLFEQGNELPGTYLVDIILNGNKVDSTNVTFHSEKSPSGEPFLQSCLTKEQLSRYGVDVDAYPELSPALKNSQTNPCVNLAAIPQASEEFQFYNMQLVLSIPQAALRPEGEVPIERWDDGITAFLLNYMANISETQFRQNGGYRRSQYIQLYPGLNLGAWRVRNATNWSQSGDRGGKWQSAYTYATRGIYRLKSRVTLGESYTPGDFFDSIPFRGVMLGDDPNMQPSNQRDFIPVVRGIARSQAQVEIRQNGYLIYSTVVPPGPFELSDVIPSKSGSDLHVRVLESNGASQAFIVPYEVPAIALRKGHLRYNLVAGQYRPANADVETPPVAQATVAYGLPWNLTAFIGEQWSRHYQATSAGLGGLLGEYGALSSSITQATSQYHHQQPVKGQAWEVRYNKTLQASDTSFSLVNSQYSTNGFSTLSDVLQSYRQSGSGDNRDKIDENSRSRDLRNQISAVIGQSLGKFGYLNLNWSRQVYRGPIPAKNSLGIHYNLNVGNSFWALSWVQNANENKNDRILSLSVSIPLGGHHDTYASYRMTSSNGSNDHEIGMYGQAFDSRLSWSVRQAEHYGQPNSGHNSGSLRLGWQGSYGNIAGNYYYTPSIRQLSADVSGGAIIHRHGLTLGPQINGTSVLVEVPGVGGVTTTEDRRLKTDFRGYSIVSGLSPYQEHDIVLETADLPPDAEVAKTDTKVLPTEGAIVRASFSPQIGAKALMTITRANGQTIPFGAMASLVNQSANAAIVDEGGKAYLTGLPETGQLLVQWGKDAGQQCRVDYQLSPAEKGDTGLYMLSGVCH.

The first 23 residues, 1-23 (MKKLIVQFTTITLLMSTSFLVGA), serve as a signal peptide directing secretion.

This sequence belongs to the fimbrial export usher family.

The protein localises to the cell outer membrane. In terms of biological role, involved in the export and assembly of PsaA (pH 6) fimbrial subunits across the outer membrane. This Yersinia pestis protein is Outer membrane usher protein PsaC (psaC).